Reading from the N-terminus, the 286-residue chain is UDP-3-O-acyl-N-acetylglucosamine deacetylase (286 aa).

Residues H79, H237, and D241 each coordinate Zn(2+). The active-site Proton donor is H264.

Belongs to the LpxC family. It depends on Zn(2+) as a cofactor.

It carries out the reaction a UDP-3-O-[(3R)-3-hydroxyacyl]-N-acetyl-alpha-D-glucosamine + H2O = a UDP-3-O-[(3R)-3-hydroxyacyl]-alpha-D-glucosamine + acetate. It participates in glycolipid biosynthesis; lipid IV(A) biosynthesis; lipid IV(A) from (3R)-3-hydroxytetradecanoyl-[acyl-carrier-protein] and UDP-N-acetyl-alpha-D-glucosamine: step 2/6. Catalyzes the hydrolysis of UDP-3-O-myristoyl-N-acetylglucosamine to form UDP-3-O-myristoylglucosamine and acetate, the committed step in lipid A biosynthesis. The sequence is that of UDP-3-O-acyl-N-acetylglucosamine deacetylase from Brucella abortus (strain 2308).